The sequence spans 141 residues: Hemoglobin subunit alpha-D (141 aa).

In terms of domain architecture, Globin spans M1 to R141. Heme b-binding residues include H58 and H87.

This sequence belongs to the globin family. As to quaternary structure, heterotetramer of two alpha-D chains and two beta chains. In terms of tissue distribution, red blood cells.

Involved in oxygen transport from the lung to the various peripheral tissues. This chain is Hemoglobin subunit alpha-D (HBAD), found in Cairina moschata (Muscovy duck).